A 418-amino-acid chain; its full sequence is Bile acid-CoA:amino acid N-acyltransferase (418 aa).

Serine 125 bears the Phosphoserine mark. Catalysis depends on charge relay system residues cysteine 235, aspartate 328, and histidine 362. Residue serine 416 is modified to Phosphoserine.

The protein belongs to the C/M/P thioester hydrolase family. In terms of assembly, monomer. As to expression, expressed in the gallbladder mucosa and pancreas. Expressed in hepatocytes (at protein level).

The protein localises to the cytoplasm. It localises to the cytosol. Its subcellular location is the peroxisome. The enzyme catalyses choloyl-CoA + glycine = glycocholate + CoA + H(+). It catalyses the reaction hexadecanoyl-CoA + H2O = hexadecanoate + CoA + H(+). The catalysed reaction is choloyl-CoA + H2O = cholate + CoA + H(+). It carries out the reaction chenodeoxycholoyl-CoA + H2O = chenodeoxycholate + CoA + H(+). The enzyme catalyses eicosanoyl-CoA + H2O = eicosanoate + CoA + H(+). It catalyses the reaction octadecanoyl-CoA + H2O = octadecanoate + CoA + H(+). The catalysed reaction is docosanoyl-CoA + H2O = docosanoate + CoA + H(+). It carries out the reaction tetracosanoyl-CoA + H2O = tetracosanoate + CoA + H(+). The enzyme catalyses hexacosanoyl-CoA + H2O = hexacosanoate + CoA + H(+). It catalyses the reaction dodecanoyl-CoA + H2O = dodecanoate + CoA + H(+). The catalysed reaction is tetradecanoyl-CoA + H2O = tetradecanoate + CoA + H(+). It carries out the reaction choloyl-CoA + taurine = taurocholate + CoA + H(+). The enzyme catalyses chenodeoxycholoyl-CoA + glycine = glycochenodeoxycholate + CoA + H(+). It catalyses the reaction chenodeoxycholoyl-CoA + taurine = taurochenodeoxycholate + CoA + H(+). The catalysed reaction is eicosanoyl-CoA + glycine = N-eicosanoylglycinate + CoA + H(+). It carries out the reaction hexacosanoyl-CoA + glycine = N-hexacosanoylglycine + CoA + H(+). The enzyme catalyses docosanoyl-CoA + glycine = N-docosanoylglycine + CoA + H(+). In terms of biological role, catalyzes the amidation of bile acids (BAs) with the amino acids taurine and glycine. More than 95% of the BAs are N-acyl amidates with glycine and taurine. Amidation of BAs in the liver with glycine or taurine prior to their excretion into bile is an important biochemical event in bile acid metabolism. This conjugation (or amidation) plays several important biological roles in that it promotes the secretion of BAs and cholesterol into bile and increases the detergent properties of BAs in the intestine, which facilitates lipid and vitamin absorption. May also act as an acyl-CoA thioesterase that regulates intracellular levels of free fatty acids. In vitro, catalyzes the hydrolysis of long- and very long-chain saturated acyl-CoAs to the free fatty acid and coenzyme A (CoASH), and conjugates glycine to these acyl-CoAs. In Homo sapiens (Human), this protein is Bile acid-CoA:amino acid N-acyltransferase (BAAT).